The sequence spans 104 residues: Large ribosomal subunit protein uL24 (104 aa).

Belongs to the universal ribosomal protein uL24 family. As to quaternary structure, part of the 50S ribosomal subunit.

One of two assembly initiator proteins, it binds directly to the 5'-end of the 23S rRNA, where it nucleates assembly of the 50S subunit. Functionally, one of the proteins that surrounds the polypeptide exit tunnel on the outside of the subunit. The polypeptide is Large ribosomal subunit protein uL24 (Buchnera aphidicola subsp. Baizongia pistaciae (strain Bp)).